Here is a 309-residue protein sequence, read N- to C-terminus: Pseudouridine-5'-phosphate glycosidase 2 (309 aa).

Glutamate 26 (proton donor) is an active-site residue. Residues lysine 87 and valine 107 each coordinate substrate. Mn(2+) is bound at residue aspartate 139. 141-143 (SAD) serves as a coordination point for substrate. Lysine 160 serves as the catalytic Nucleophile.

Belongs to the pseudouridine-5'-phosphate glycosidase family. In terms of assembly, homotrimer. Mn(2+) is required as a cofactor.

It catalyses the reaction D-ribose 5-phosphate + uracil = psi-UMP + H2O. Its function is as follows. Catalyzes the reversible cleavage of pseudouridine 5'-phosphate (PsiMP) to ribose 5-phosphate and uracil. Functions biologically in the cleavage direction, as part of a pseudouridine degradation pathway. This is Pseudouridine-5'-phosphate glycosidase 2 from Rhizobium johnstonii (strain DSM 114642 / LMG 32736 / 3841) (Rhizobium leguminosarum bv. viciae).